We begin with the raw amino-acid sequence, 216 residues long: Thiamine-phosphate synthase (216 aa).

4-amino-2-methyl-5-(diphosphooxymethyl)pyrimidine is bound by residues 41–45 (QLREK) and D77. The Mg(2+) site is built by D78 and D97. A 4-amino-2-methyl-5-(diphosphooxymethyl)pyrimidine-binding site is contributed by S116. 143-145 (TTS) is a 2-[(2R,5Z)-2-carboxy-4-methylthiazol-5(2H)-ylidene]ethyl phosphate binding site. K146 serves as a coordination point for 4-amino-2-methyl-5-(diphosphooxymethyl)pyrimidine. Residues G174 and 194-195 (IS) each bind 2-[(2R,5Z)-2-carboxy-4-methylthiazol-5(2H)-ylidene]ethyl phosphate.

This sequence belongs to the thiamine-phosphate synthase family. It depends on Mg(2+) as a cofactor.

The enzyme catalyses 2-[(2R,5Z)-2-carboxy-4-methylthiazol-5(2H)-ylidene]ethyl phosphate + 4-amino-2-methyl-5-(diphosphooxymethyl)pyrimidine + 2 H(+) = thiamine phosphate + CO2 + diphosphate. It catalyses the reaction 2-(2-carboxy-4-methylthiazol-5-yl)ethyl phosphate + 4-amino-2-methyl-5-(diphosphooxymethyl)pyrimidine + 2 H(+) = thiamine phosphate + CO2 + diphosphate. It carries out the reaction 4-methyl-5-(2-phosphooxyethyl)-thiazole + 4-amino-2-methyl-5-(diphosphooxymethyl)pyrimidine + H(+) = thiamine phosphate + diphosphate. The protein operates within cofactor biosynthesis; thiamine diphosphate biosynthesis; thiamine phosphate from 4-amino-2-methyl-5-diphosphomethylpyrimidine and 4-methyl-5-(2-phosphoethyl)-thiazole: step 1/1. In terms of biological role, condenses 4-methyl-5-(beta-hydroxyethyl)thiazole monophosphate (THZ-P) and 2-methyl-4-amino-5-hydroxymethyl pyrimidine pyrophosphate (HMP-PP) to form thiamine monophosphate (TMP). This Pediococcus pentosaceus (strain ATCC 25745 / CCUG 21536 / LMG 10740 / 183-1w) protein is Thiamine-phosphate synthase.